Reading from the N-terminus, the 317-residue chain is Porphobilinogen deaminase (317 aa).

S-(dipyrrolylmethanemethyl)cysteine is present on C245.

The protein belongs to the HMBS family. Monomer. Dipyrromethane is required as a cofactor.

The enzyme catalyses 4 porphobilinogen + H2O = hydroxymethylbilane + 4 NH4(+). It functions in the pathway porphyrin-containing compound metabolism; protoporphyrin-IX biosynthesis; coproporphyrinogen-III from 5-aminolevulinate: step 2/4. The protein operates within porphyrin-containing compound metabolism; chlorophyll biosynthesis. Functionally, tetrapolymerization of the monopyrrole PBG into the hydroxymethylbilane pre-uroporphyrinogen in several discrete steps. This chain is Porphobilinogen deaminase, found in Parasynechococcus marenigrum (strain WH8102).